The following is a 70-amino-acid chain: Exodeoxyribonuclease 7 small subunit (70 aa).

It belongs to the XseB family. As to quaternary structure, heterooligomer composed of large and small subunits.

It localises to the cytoplasm. The enzyme catalyses Exonucleolytic cleavage in either 5'- to 3'- or 3'- to 5'-direction to yield nucleoside 5'-phosphates.. In terms of biological role, bidirectionally degrades single-stranded DNA into large acid-insoluble oligonucleotides, which are then degraded further into small acid-soluble oligonucleotides. The polypeptide is Exodeoxyribonuclease 7 small subunit (Streptococcus pneumoniae serotype 2 (strain D39 / NCTC 7466)).